Reading from the N-terminus, the 220-residue chain is IQ domain-containing protein F3 (220 aa).

Basic and acidic residues predominate over residues 1–22 (MELDQDQKVETPEAAENGKDEM). Residues 1–81 (MELDQDQKVE…KQIQDEKTGI (81 aa)) are disordered. Residues 23-50 (QLEEQTQDEDTTETETETETETEAEAEG) are compositionally biased toward acidic residues. The stretch at 69 to 93 (QAEKQIQDEKTGIKEADRAIQEQTQ) forms a coiled coil. In terms of domain architecture, IQ spans 146–175 (AELAGVKIQAWWRGTLVRRTLLLAILSAWT).

The sequence is that of IQ domain-containing protein F3 (Iqcf3) from Rattus norvegicus (Rat).